The sequence spans 127 residues: Aspartate 1-decarboxylase (127 aa).

S25 serves as the catalytic Schiff-base intermediate with substrate; via pyruvic acid. Residue S25 is modified to Pyruvic acid (Ser). T57 is a substrate binding site. Residue Y58 is the Proton donor of the active site. 73–75 is a substrate binding site; it reads GAA.

The protein belongs to the PanD family. Heterooctamer of four alpha and four beta subunits. Pyruvate serves as cofactor. Post-translationally, is synthesized initially as an inactive proenzyme, which is activated by self-cleavage at a specific serine bond to produce a beta-subunit with a hydroxyl group at its C-terminus and an alpha-subunit with a pyruvoyl group at its N-terminus.

The protein localises to the cytoplasm. The enzyme catalyses L-aspartate + H(+) = beta-alanine + CO2. Its pathway is cofactor biosynthesis; (R)-pantothenate biosynthesis; beta-alanine from L-aspartate: step 1/1. Catalyzes the pyruvoyl-dependent decarboxylation of aspartate to produce beta-alanine. This Neisseria meningitidis serogroup A / serotype 4A (strain DSM 15465 / Z2491) protein is Aspartate 1-decarboxylase.